A 353-amino-acid polypeptide reads, in one-letter code: Protein MGF 360-9L (353 aa).

Belongs to the asfivirus MGF 360 family. As to quaternary structure, interacts with host STAT1; this interaction mediates STAT1 degradation through apoptosis. Interacts with host STAT2; this interaction mediates STAT2 degradation through the proteasome.

It localises to the host cytoplasm. In terms of biological role, plays a role in virus cell tropism, and may be required for efficient virus replication in macrophages. In addition, inhibits IFN-beta-induced IFN-stimulated genes (ISGs) transcription. Mechanistically, degrades host STAT1 and STAT2 through apoptosis and ubiquitin-proteasome pathways respectively. This African swine fever virus (isolate Tick/Malawi/Lil 20-1/1983) (ASFV) protein is Protein MGF 360-9L.